The chain runs to 163 residues: Neurotrophin-3 (163 aa).

An N-terminal signal peptide occupies residues 1–3 (IQS). Positions 4 to 119 (TSMDQGILTE…VLNRTSRRKR (116 aa)) are excised as a propeptide. N112 is a glycosylation site (N-linked (GlcNAc...) asparagine).

It belongs to the NGF-beta family.

It is found in the secreted. Functionally, seems to promote the survival of visceral and proprioceptive sensory neurons. This chain is Neurotrophin-3 (NTF3), found in Chilabothrus striatus (Haitian boa constrictor).